Consider the following 205-residue polypeptide: Beta-crystallin B2 (205 aa).

An N-acetylalanine modification is found at Ala-2. An N-terminal arm region spans residues 2–16; that stretch reads ASDHQTQAGKPQPLN. Beta/gamma crystallin 'Greek key' domains lie at 17–56 and 57–101; these read PKIIIFEQENFQGHSHELSGPCPNLKETGVEKAGSVLVQA and GPWV…RPIK. A connecting peptide region spans residues 102 to 106; that stretch reads VDSQE. Beta/gamma crystallin 'Greek key' domains lie at 107–148 and 149–191; these read HKII…RVQS and GTWV…RRIR. The segment at 193 to 205 is C-terminal arm; that stretch reads MQWHQRGAFHPSN.

The protein belongs to the beta/gamma-crystallin family. In terms of assembly, homo/heterodimer, or complexes of higher-order. The structure of beta-crystallin oligomers seems to be stabilized through interactions between the N-terminal arms.

Functionally, crystallins are the dominant structural components of the vertebrate eye lens. The protein is Beta-crystallin B2 (CRYBB2) of Canis lupus familiaris (Dog).